A 164-amino-acid chain; its full sequence is UPF0304 protein PC1_2778 (164 aa).

This sequence belongs to the UPF0304 family.

The protein is UPF0304 protein PC1_2778 of Pectobacterium carotovorum subsp. carotovorum (strain PC1).